A 487-amino-acid polypeptide reads, in one-letter code: GTPase Der (487 aa).

Residues 2–166 (LKIAILGRPN…RIKLVANLPE (165 aa)) form the EngA-type G 1 domain. GTP is bound by residues 8–15 (GRPNVGKS), 55–59 (DTGGV), and 118–121 (NKAD). Residues 165 to 194 (PEPREEEEEGLEELSVDEHEESEAALPSNT) form a disordered region. A compositionally biased stretch (acidic residues) spans 168–187 (REEEEEGLEELSVDEHEESE). An EngA-type G 2 domain is found at 225-398 (LKIALIGRPN…AIDELHHVVS (174 aa)). Residues 231–238 (GRPNVGKS), 278–282 (DTAGL), and 343–346 (NKWD) contribute to the GTP site. Residues 399-483 (NKVPTPIVNK…PFDLEFKEKP (85 aa)) enclose the KH-like domain.

The protein belongs to the TRAFAC class TrmE-Era-EngA-EngB-Septin-like GTPase superfamily. EngA (Der) GTPase family. In terms of assembly, associates with the 50S ribosomal subunit.

In terms of biological role, GTPase that plays an essential role in the late steps of ribosome biogenesis. This Chlamydia pneumoniae (Chlamydophila pneumoniae) protein is GTPase Der.